A 548-amino-acid chain; its full sequence is Formyltransferase/hydrolase complex Fhc subunit A (548 aa).

Residues His-57, His-59, and His-227 each contribute to the Zn(2+) site.

It belongs to the metallo-dependent hydrolases superfamily. FwdA/FmdA family. As to quaternary structure, octaheteromer. Part of the formyltransferase/hydrolase complex fhc; composed of FhcA, FhcB, FhcC and FhcD. It depends on Zn(2+) as a cofactor.

It is found in the cytoplasm. The catalysed reaction is N-formylmethanofuran + H2O = methanofuran + formate. It participates in one-carbon metabolism; formaldehyde degradation; formate from formaldehyde (H(4)MPT route): step 4/5. Its function is as follows. Involved in the transformation of 5-formyl tetrahydromethanopterin (5-formyl-H(4)MPT) to methanofuran (MFR) and formate via the formylmethanofuran (formyl-MFR). May be catalyze the hydrolysis of formylmethanofuran (formyl-MFR) to yield formate and MFR. The polypeptide is Formyltransferase/hydrolase complex Fhc subunit A (fhcA) (Methylorubrum extorquens (strain ATCC 14718 / DSM 1338 / JCM 2805 / NCIMB 9133 / AM1) (Methylobacterium extorquens)).